The sequence spans 284 residues: NAD kinase (284 aa).

The active-site Proton acceptor is aspartate 67. Residues 67–68, 141–142, arginine 152, lysine 169, aspartate 171, 182–187, and glutamine 241 each bind NAD(+); these read DG, ND, and TGYSLS.

It belongs to the NAD kinase family. A divalent metal cation serves as cofactor.

It is found in the cytoplasm. It catalyses the reaction NAD(+) + ATP = ADP + NADP(+) + H(+). Its function is as follows. Involved in the regulation of the intracellular balance of NAD and NADP, and is a key enzyme in the biosynthesis of NADP. Catalyzes specifically the phosphorylation on 2'-hydroxyl of the adenosine moiety of NAD to yield NADP. This Geotalea daltonii (strain DSM 22248 / JCM 15807 / FRC-32) (Geobacter daltonii) protein is NAD kinase.